A 133-amino-acid chain; its full sequence is Small ribosomal subunit protein uS9 (133 aa).

The interval 101-133 (MKPKGLLTRDPREVERKKYGLKKARRAPQFSKR) is disordered. Residues 107–118 (LTRDPREVERKK) show a composition bias toward basic and acidic residues. Residues 119–133 (YGLKKARRAPQFSKR) show a composition bias toward basic residues.

Belongs to the universal ribosomal protein uS9 family.

This is Small ribosomal subunit protein uS9 from Deinococcus radiodurans (strain ATCC 13939 / DSM 20539 / JCM 16871 / CCUG 27074 / LMG 4051 / NBRC 15346 / NCIMB 9279 / VKM B-1422 / R1).